Here is a 295-residue protein sequence, read N- to C-terminus: MGQKINPTGFRLSISRNWSSRWYANNRDFAGMLAEDIKVREYLKKKLKNAAVSRVLIERPAKNARITIFSARPGVVIGKKGEDIEALKKELSRQLGVPVAVNIEEVRKPEIDAKLIADSITQQLEKRIMFRRAMKRAMQNAMRLGALGIKIMSSGRLNGIEIARCEWYREGRVPLHTLRADIDYGTSEAQTTYGIIGVKVWVYKGDTLGRNDGTGAKMIEVADEERKPRGPRRDARPGDRPDRGAPRGAPRAPRGNYAPADGSDKPAEAAGADNNTVKRVRKAAPAAAADGAKTE.

The KH type-2 domain maps to 39 to 107; that stretch reads VREYLKKKLK…PVAVNIEEVR (69 aa). A disordered region spans residues 213-295; that stretch reads GTGAKMIEVA…AAAADGAKTE (83 aa). The segment covering 224 to 245 has biased composition (basic and acidic residues); the sequence is EERKPRGPRRDARPGDRPDRGA. 2 stretches are compositionally biased toward low complexity: residues 246–255 and 283–295; these read PRGAPRAPRG and AAPA…AKTE.

It belongs to the universal ribosomal protein uS3 family. As to quaternary structure, part of the 30S ribosomal subunit. Forms a tight complex with proteins S10 and S14.

Functionally, binds the lower part of the 30S subunit head. Binds mRNA in the 70S ribosome, positioning it for translation. This is Small ribosomal subunit protein uS3 from Polaromonas naphthalenivorans (strain CJ2).